The chain runs to 417 residues: Serine hydroxymethyltransferase (417 aa).

Residues leucine 121 and 125-127 each bind (6S)-5,6,7,8-tetrahydrofolate; that span reads GHL. Lysine 230 is modified (N6-(pyridoxal phosphate)lysine). Position 355–357 (355–357) interacts with (6S)-5,6,7,8-tetrahydrofolate; it reads SPF.

The protein belongs to the SHMT family. As to quaternary structure, homodimer. Pyridoxal 5'-phosphate serves as cofactor.

It localises to the cytoplasm. It catalyses the reaction (6R)-5,10-methylene-5,6,7,8-tetrahydrofolate + glycine + H2O = (6S)-5,6,7,8-tetrahydrofolate + L-serine. The protein operates within one-carbon metabolism; tetrahydrofolate interconversion. Its pathway is amino-acid biosynthesis; glycine biosynthesis; glycine from L-serine: step 1/1. Functionally, catalyzes the reversible interconversion of serine and glycine with tetrahydrofolate (THF) serving as the one-carbon carrier. This reaction serves as the major source of one-carbon groups required for the biosynthesis of purines, thymidylate, methionine, and other important biomolecules. Also exhibits THF-independent aldolase activity toward beta-hydroxyamino acids, producing glycine and aldehydes, via a retro-aldol mechanism. This Nitrosococcus oceani (strain ATCC 19707 / BCRC 17464 / JCM 30415 / NCIMB 11848 / C-107) protein is Serine hydroxymethyltransferase.